A 311-amino-acid polypeptide reads, in one-letter code: Formimidoylglutamase (311 aa).

Mn(2+) is bound by residues His127, Asp152, His154, Asp156, Cys236, and Asp238.

It belongs to the arginase family. The cofactor is Mn(2+).

It carries out the reaction N-formimidoyl-L-glutamate + H2O = formamide + L-glutamate. It participates in amino-acid degradation; L-histidine degradation into L-glutamate; L-glutamate from N-formimidoyl-L-glutamate (hydrolase route): step 1/1. In terms of biological role, catalyzes the conversion of N-formimidoyl-L-glutamate to L-glutamate and formamide. This Macrococcus caseolyticus (strain JCSC5402) (Macrococcoides caseolyticum) protein is Formimidoylglutamase.